A 207-amino-acid polypeptide reads, in one-letter code: Large ribosomal subunit protein uL4 (207 aa).

Positions 49-75 (HAVKNRSAVSGGGRKPWKQKGTGRARA) are disordered.

This sequence belongs to the universal ribosomal protein uL4 family. As to quaternary structure, part of the 50S ribosomal subunit.

One of the primary rRNA binding proteins, this protein initially binds near the 5'-end of the 23S rRNA. It is important during the early stages of 50S assembly. It makes multiple contacts with different domains of the 23S rRNA in the assembled 50S subunit and ribosome. Functionally, forms part of the polypeptide exit tunnel. This Leuconostoc mesenteroides subsp. mesenteroides (strain ATCC 8293 / DSM 20343 / BCRC 11652 / CCM 1803 / JCM 6124 / NCDO 523 / NBRC 100496 / NCIMB 8023 / NCTC 12954 / NRRL B-1118 / 37Y) protein is Large ribosomal subunit protein uL4.